Here is a 169-residue protein sequence, read N- to C-terminus: S-ribosylhomocysteine lyase (169 aa).

Residues His-54, His-58, and Cys-128 each contribute to the Fe cation site.

It belongs to the LuxS family. Homodimer. It depends on Fe cation as a cofactor.

The enzyme catalyses S-(5-deoxy-D-ribos-5-yl)-L-homocysteine = (S)-4,5-dihydroxypentane-2,3-dione + L-homocysteine. Involved in the synthesis of autoinducer 2 (AI-2) which is secreted by bacteria and is used to communicate both the cell density and the metabolic potential of the environment. The regulation of gene expression in response to changes in cell density is called quorum sensing. Catalyzes the transformation of S-ribosylhomocysteine (RHC) to homocysteine (HC) and 4,5-dihydroxy-2,3-pentadione (DPD). The protein is S-ribosylhomocysteine lyase of Shewanella frigidimarina (strain NCIMB 400).